The sequence spans 65 residues: VESP-VB1 (65 aa).

Residues 1 to 23 form the signal peptide; that stretch reads MKMSILFLFALIASLACLQLTFA. AXPX repeat units follow at residues 23-26, 27-30, 31-34, 35-38, 39-42, 43-46, and 47-50; these read AAPA, ASPL, ANPG, ASPE, AAPL, ADPL, and ADPF. The propeptide occupies 24-49; it reads APAASPLANPGASPEAAPLADPLADP. Leu62 is subject to Leucine amide.

Expressed by the venom gland.

The protein resides in the secreted. Antimicrobial peptide. Shows activity against both Gram-positive (S.aureus MIC=1.0-3.75 ug/ml) and -negative (E.coli MIC=7.5-15 ug/ml) bacteria, as well against fungi (C.albicans MIC=30 ug/ml). Also promotes important mast cell degranulation. Shows little hemolytic activity on rabbit and human erythrocytes. Its mast cell degranulation activity may be related to the activation of G-protein coupled receptors in mast cells as well as interaction with other proteins located in cell endosomal membranes in the mast cells. This Vespa bicolor (Black shield wasp) protein is VESP-VB1.